A 300-amino-acid chain; its full sequence is NAD kinase (300 aa).

The Proton acceptor role is filled by D75. Residues 75–76 (DG), 149–150 (ND), R177, D179, 190–195 (TAYALS), A214, and Q248 contribute to the NAD(+) site.

Belongs to the NAD kinase family. The cofactor is a divalent metal cation.

It is found in the cytoplasm. It catalyses the reaction NAD(+) + ATP = ADP + NADP(+) + H(+). In terms of biological role, involved in the regulation of the intracellular balance of NAD and NADP, and is a key enzyme in the biosynthesis of NADP. Catalyzes specifically the phosphorylation on 2'-hydroxyl of the adenosine moiety of NAD to yield NADP. The chain is NAD kinase from Burkholderia orbicola (strain MC0-3).